Here is a 219-residue protein sequence, read N- to C-terminus: 3,4-dihydroxy-2-butanone 4-phosphate synthase (219 aa).

D-ribulose 5-phosphate-binding positions include 37–38 (RE), Asp-42, 150–154 (RRGHT), and Glu-174. Glu-38 contributes to the Mg(2+) binding site. His-153 is a Mg(2+) binding site.

Belongs to the DHBP synthase family. As to quaternary structure, homodimer. Requires Mg(2+) as cofactor. Mn(2+) serves as cofactor.

The enzyme catalyses D-ribulose 5-phosphate = (2S)-2-hydroxy-3-oxobutyl phosphate + formate + H(+). Its pathway is cofactor biosynthesis; riboflavin biosynthesis; 2-hydroxy-3-oxobutyl phosphate from D-ribulose 5-phosphate: step 1/1. Functionally, catalyzes the conversion of D-ribulose 5-phosphate to formate and 3,4-dihydroxy-2-butanone 4-phosphate. The polypeptide is 3,4-dihydroxy-2-butanone 4-phosphate synthase (Oleidesulfovibrio alaskensis (strain ATCC BAA-1058 / DSM 17464 / G20) (Desulfovibrio alaskensis)).